The chain runs to 382 residues: UDP-4-amino-4-deoxy-L-arabinose--oxoglutarate aminotransferase (382 aa).

Lys-183 bears the N6-(pyridoxal phosphate)lysine mark.

It belongs to the DegT/DnrJ/EryC1 family. ArnB subfamily. Homodimer. It depends on pyridoxal 5'-phosphate as a cofactor.

The enzyme catalyses UDP-4-amino-4-deoxy-beta-L-arabinose + 2-oxoglutarate = UDP-beta-L-threo-pentopyranos-4-ulose + L-glutamate. It participates in nucleotide-sugar biosynthesis; UDP-4-deoxy-4-formamido-beta-L-arabinose biosynthesis; UDP-4-deoxy-4-formamido-beta-L-arabinose from UDP-alpha-D-glucuronate: step 2/3. It functions in the pathway bacterial outer membrane biogenesis; lipopolysaccharide biosynthesis. Catalyzes the conversion of UDP-4-keto-arabinose (UDP-Ara4O) to UDP-4-amino-4-deoxy-L-arabinose (UDP-L-Ara4N). The modified arabinose is attached to lipid A and is required for resistance to polymyxin and cationic antimicrobial peptides. This chain is UDP-4-amino-4-deoxy-L-arabinose--oxoglutarate aminotransferase, found in Pseudomonas aeruginosa (strain LESB58).